The primary structure comprises 76 residues: Esculentin-2MT1 (76 aa).

The first 22 residues, 1 to 22 (MFTMKKPLLLLFFLGTISLSLC), serve as a signal peptide directing secretion. A propeptide spanning residues 23 to 37 (EEERNADEDDGEKEV) is cleaved from the precursor. An intrachain disulfide couples Cys70 to Cys76.

Belongs to the frog skin active peptide (FSAP) family. Esculentin subfamily. Expressed by the skin glands.

It localises to the secreted. Antimicrobial peptide. The protein is Esculentin-2MT1 of Amolops mantzorum (Sichuan torrent frog).